The sequence spans 134 residues: Ribosome-binding factor A (134 aa).

The protein belongs to the RbfA family. As to quaternary structure, monomer. Binds 30S ribosomal subunits, but not 50S ribosomal subunits or 70S ribosomes.

It localises to the cytoplasm. One of several proteins that assist in the late maturation steps of the functional core of the 30S ribosomal subunit. Associates with free 30S ribosomal subunits (but not with 30S subunits that are part of 70S ribosomes or polysomes). Required for efficient processing of 16S rRNA. May interact with the 5'-terminal helix region of 16S rRNA. The polypeptide is Ribosome-binding factor A (Synechococcus sp. (strain CC9311)).